A 349-amino-acid chain; its full sequence is Anthranilate phosphoribosyltransferase (349 aa).

5-phospho-alpha-D-ribose 1-diphosphate contacts are provided by residues glycine 82, 85-86 (GD), 92-95 (NVST), 110-118 (KHGNRAVSG), and serine 122. Residue glycine 82 participates in anthranilate binding. Serine 94 provides a ligand contact to Mg(2+). Asparagine 113 contacts anthranilate. Arginine 168 serves as a coordination point for anthranilate. Mg(2+) is bound by residues aspartate 227 and glutamate 228.

Belongs to the anthranilate phosphoribosyltransferase family. As to quaternary structure, homodimer. It depends on Mg(2+) as a cofactor.

The enzyme catalyses N-(5-phospho-beta-D-ribosyl)anthranilate + diphosphate = 5-phospho-alpha-D-ribose 1-diphosphate + anthranilate. It functions in the pathway amino-acid biosynthesis; L-tryptophan biosynthesis; L-tryptophan from chorismate: step 2/5. Its function is as follows. Catalyzes the transfer of the phosphoribosyl group of 5-phosphorylribose-1-pyrophosphate (PRPP) to anthranilate to yield N-(5'-phosphoribosyl)-anthranilate (PRA). The protein is Anthranilate phosphoribosyltransferase of Pseudomonas putida (strain ATCC 47054 / DSM 6125 / CFBP 8728 / NCIMB 11950 / KT2440).